The following is a 248-amino-acid chain: tRNA pseudouridine synthase A 2 (248 aa).

Catalysis depends on D55, which acts as the Nucleophile. Y113 serves as a coordination point for substrate.

Belongs to the tRNA pseudouridine synthase TruA family. As to quaternary structure, homodimer.

The enzyme catalyses uridine(38/39/40) in tRNA = pseudouridine(38/39/40) in tRNA. In terms of biological role, formation of pseudouridine at positions 38, 39 and 40 in the anticodon stem and loop of transfer RNAs. The sequence is that of tRNA pseudouridine synthase A 2 from Clostridium tetani (strain Massachusetts / E88).